Here is a 119-residue protein sequence, read N- to C-terminus: Ribonuclease P protein component (119 aa).

It belongs to the RnpA family. Consists of a catalytic RNA component (M1 or rnpB) and a protein subunit.

It catalyses the reaction Endonucleolytic cleavage of RNA, removing 5'-extranucleotides from tRNA precursor.. In terms of biological role, RNaseP catalyzes the removal of the 5'-leader sequence from pre-tRNA to produce the mature 5'-terminus. It can also cleave other RNA substrates such as 4.5S RNA. The protein component plays an auxiliary but essential role in vivo by binding to the 5'-leader sequence and broadening the substrate specificity of the ribozyme. This chain is Ribonuclease P protein component, found in Mycolicibacterium paratuberculosis (strain ATCC BAA-968 / K-10) (Mycobacterium paratuberculosis).